Consider the following 425-residue polypeptide: Trigger factor (425 aa).

The 74-residue stretch at 158–231 (GDLVRVNMEV…VEEVYKRTLP (74 aa)) folds into the PPIase FKBP-type domain.

It belongs to the FKBP-type PPIase family. Tig subfamily.

The protein localises to the cytoplasm. The enzyme catalyses [protein]-peptidylproline (omega=180) = [protein]-peptidylproline (omega=0). Its function is as follows. Involved in protein export. Acts as a chaperone by maintaining the newly synthesized protein in an open conformation. Functions as a peptidyl-prolyl cis-trans isomerase. This chain is Trigger factor, found in Thermotoga petrophila (strain ATCC BAA-488 / DSM 13995 / JCM 10881 / RKU-1).